The chain runs to 214 residues: Riboflavin kinase (214 aa).

The segment at Met1–Gly27 is disordered. 2 residues coordinate Mg(2+): Thr44 and Asn46. Residue Glu101 is the Nucleophile of the active site.

Belongs to the flavokinase family. Zn(2+) is required as a cofactor. It depends on Mg(2+) as a cofactor.

The enzyme catalyses riboflavin + ATP = FMN + ADP + H(+). Its pathway is cofactor biosynthesis; FMN biosynthesis; FMN from riboflavin (ATP route): step 1/1. Its function is as follows. Catalyzes the phosphorylation of riboflavin (vitamin B2) to form flavin mononucleotide (FMN) coenzyme. The protein is Riboflavin kinase (fmn1) of Aspergillus niger (strain ATCC MYA-4892 / CBS 513.88 / FGSC A1513).